A 104-amino-acid polypeptide reads, in one-letter code: uncharacterized protein (104 aa).

Residues 55-104 (RPFSSDRINRPFSPDKKGEPIFPDKRDRPFSPDRINRPFSPDKKGEPIFP) are disordered.

The protein resides in the plastid. This is an uncharacterized protein from Euglena longa (Euglenophycean alga).